The primary structure comprises 480 residues: Adenosylhomocysteinase (480 aa).

Substrate contacts are provided by threonine 63, aspartate 142, and glutamate 203. 204-206 (TTT) contacts NAD(+). 2 residues coordinate substrate: lysine 233 and aspartate 237. NAD(+)-binding positions include asparagine 238, 267–272 (GYGDVG), glutamate 290, asparagine 325, 346–348 (IGH), and asparagine 394.

This sequence belongs to the adenosylhomocysteinase family. It depends on NAD(+) as a cofactor.

Its subcellular location is the cytoplasm. The catalysed reaction is S-adenosyl-L-homocysteine + H2O = L-homocysteine + adenosine. It participates in amino-acid biosynthesis; L-homocysteine biosynthesis; L-homocysteine from S-adenosyl-L-homocysteine: step 1/1. Functionally, may play a key role in the regulation of the intracellular concentration of adenosylhomocysteine. The protein is Adenosylhomocysteinase of Xylella fastidiosa (strain Temecula1 / ATCC 700964).